The chain runs to 172 residues: Myosin regulatory light chain 2, smooth muscle major isoform (172 aa).

Positions 1–16 (MSSKRAKAKTTKKRPQ) are enriched in basic residues. Residues 1 to 20 (MSSKRAKAKTTKKRPQRATS) are disordered. Ser-2 carries the N-acetylserine modification. 3 consecutive EF-hand domains span residues 29-64 (SQIQEFKEAFNMIDQNRDGFIDKEDLHDMLASMGKN), 98-133 (DPEDVIRNAFACFDEEASGFIHEDHLRELLTTMGDR), and 134-169 (FTDEEVDEMYREAPIDKKGNFNYVEFTRILKHGAKD). Asp-42, Asn-44, Asp-46, and Asp-53 together coordinate Ca(2+).

Myosin is a hexamer of 2 heavy chains and 4 light chains.

In terms of biological role, myosin regulatory subunit that plays an important role in regulation of both smooth muscle and nonmuscle cell contractile activity. Implicated in cytokinesis, receptor capping, and cell locomotion. The chain is Myosin regulatory light chain 2, smooth muscle major isoform from Gallus gallus (Chicken).